The following is an 81-amino-acid chain: Sulfur carrier protein TusA (81 aa).

Cys19 functions as the Cysteine persulfide intermediate in the catalytic mechanism.

This sequence belongs to the sulfur carrier protein TusA family.

It localises to the cytoplasm. Sulfur carrier protein which probably makes part of a sulfur-relay system. This is Sulfur carrier protein TusA from Shewanella baltica (strain OS185).